Consider the following 319-residue polypeptide: Ribosomal large subunit pseudouridine synthase C (319 aa).

One can recognise an S4 RNA-binding domain in the interval 20–83; it reads QRIDNFLRTQ…AEREEEAVSP (64 aa). Asp-144 is a catalytic residue.

This sequence belongs to the pseudouridine synthase RluA family.

The enzyme catalyses uridine(955/2504/2580) in 23S rRNA = pseudouridine(955/2504/2580) in 23S rRNA. Functionally, responsible for synthesis of pseudouridine from uracil at positions 955, 2504 and 2580 in 23S ribosomal RNA. The sequence is that of Ribosomal large subunit pseudouridine synthase C (rluC) from Escherichia coli O157:H7.